The sequence spans 479 residues: ATP synthase subunit beta (479 aa).

Residue 162–169 (GGAGVGKT) coordinates ATP.

This sequence belongs to the ATPase alpha/beta chains family. In terms of assembly, F-type ATPases have 2 components, CF(1) - the catalytic core - and CF(0) - the membrane proton channel. CF(1) has five subunits: alpha(3), beta(3), gamma(1), delta(1), epsilon(1). CF(0) has three main subunits: a(1), b(2) and c(9-12). The alpha and beta chains form an alternating ring which encloses part of the gamma chain. CF(1) is attached to CF(0) by a central stalk formed by the gamma and epsilon chains, while a peripheral stalk is formed by the delta and b chains.

The protein resides in the cell membrane. It carries out the reaction ATP + H2O + 4 H(+)(in) = ADP + phosphate + 5 H(+)(out). Produces ATP from ADP in the presence of a proton gradient across the membrane. The catalytic sites are hosted primarily by the beta subunits. The sequence is that of ATP synthase subunit beta from Mesoplasma florum (strain ATCC 33453 / NBRC 100688 / NCTC 11704 / L1) (Acholeplasma florum).